A 221-amino-acid polypeptide reads, in one-letter code: MGQKVNPKGLRVGIIKDWEGKWFADKRNYSNLLIEDVKIREYIKRKLYQAGISRIQIERAANRVKVSIHTAKPGIVIGRGGAEVEALRKELEKMTAKQVHVNIVEVKTPEVDAQLVAENIASQLEKRIAFRRAMKQTVQRSLRMGAKGIKIACSGRLAGAEIARTEWYSEGKVPLHTLRADIDYGFAEANTTYGKIGVKVWIYKGEVLPEAKKPAAGQGGE.

Positions 39-107 constitute a KH type-2 domain; the sequence is IREYIKRKLY…QVHVNIVEVK (69 aa).

This sequence belongs to the universal ribosomal protein uS3 family. As to quaternary structure, part of the 30S ribosomal subunit. Forms a tight complex with proteins S10 and S14.

Functionally, binds the lower part of the 30S subunit head. Binds mRNA in the 70S ribosome, positioning it for translation. This Desulforamulus reducens (strain ATCC BAA-1160 / DSM 100696 / MI-1) (Desulfotomaculum reducens) protein is Small ribosomal subunit protein uS3.